A 699-amino-acid chain; its full sequence is Polyribonucleotide nucleotidyltransferase (699 aa).

The Mg(2+) site is built by Asp485 and Asp491. In terms of domain architecture, KH spans 552 to 611 (PRITTIKINPEKIRDVIGKGGAVIRALTEETGTTIELEDDGTVKIASSNGEATKEAIRRI). Positions 621–689 (GRIYNGKVIR…RQGRVRLSIK (69 aa)) constitute an S1 motif domain.

The protein belongs to the polyribonucleotide nucleotidyltransferase family. As to quaternary structure, component of the RNA degradosome, which is a multiprotein complex involved in RNA processing and mRNA degradation. Mg(2+) is required as a cofactor.

It localises to the cytoplasm. It catalyses the reaction RNA(n+1) + phosphate = RNA(n) + a ribonucleoside 5'-diphosphate. Its function is as follows. Involved in mRNA degradation. Catalyzes the phosphorolysis of single-stranded polyribonucleotides processively in the 3'- to 5'-direction. This Shewanella oneidensis (strain ATCC 700550 / JCM 31522 / CIP 106686 / LMG 19005 / NCIMB 14063 / MR-1) protein is Polyribonucleotide nucleotidyltransferase.